We begin with the raw amino-acid sequence, 379 residues long: Homoserine O-succinyltransferase (379 aa).

Residues 51-360 (NAVLICHALS…DAPQGHDAFL (310 aa)) form the AB hydrolase-1 domain. Catalysis depends on S157, which acts as the Nucleophile. Position 227 (R227) interacts with substrate. Catalysis depends on residues D323 and H356. Substrate is bound at residue D357.

This sequence belongs to the AB hydrolase superfamily. MetX family. In terms of assembly, homodimer.

It localises to the cytoplasm. It carries out the reaction L-homoserine + succinyl-CoA = O-succinyl-L-homoserine + CoA. It participates in amino-acid biosynthesis; L-methionine biosynthesis via de novo pathway; O-succinyl-L-homoserine from L-homoserine: step 1/1. Functionally, transfers a succinyl group from succinyl-CoA to L-homoserine, forming succinyl-L-homoserine. This Pseudomonas savastanoi pv. phaseolicola (strain 1448A / Race 6) (Pseudomonas syringae pv. phaseolicola (strain 1448A / Race 6)) protein is Homoserine O-succinyltransferase.